A 1056-amino-acid polypeptide reads, in one-letter code: Carbamoyl phosphate synthase large chain (1056 aa).

Residues 1–401 (MPKRTDIHKI…ALHKAVRSLE (401 aa)) form a carboxyphosphate synthetic domain region. Residues Arg129, Arg169, Gly175, Gly176, Lys208, Ile210, Glu215, Gly241, Ile242, His243, Gln284, and Glu298 each coordinate ATP. The ATP-grasp 1 domain maps to 133 to 327 (KELMNELGEP…IAKMAAKIAV (195 aa)). 3 residues coordinate Mg(2+): Gln284, Glu298, and Asn300. Gln284, Glu298, and Asn300 together coordinate Mn(2+). The tract at residues 402–546 (IDEKDLFSAE…YSAYDHENES (145 aa)) is oligomerization domain. Residues 547–929 (QRTKKPSILV…ALHKAFSGAH (383 aa)) form a carbamoyl phosphate synthetic domain region. The 191-residue stretch at 671–861 (DQVITDLNLK…MAQVATRVIL (191 aa)) folds into the ATP-grasp 2 domain. Arg707, Ala746, Leu748, Glu752, Gly777, Val778, His779, Ser780, Gln820, and Glu832 together coordinate ATP. Mg(2+) is bound by residues Gln820, Glu832, and Asn834. 3 residues coordinate Mn(2+): Gln820, Glu832, and Asn834. The 127-residue stretch at 930 to 1056 (IQVPNDGKIL…DQSLEAITIK (127 aa)) folds into the MGS-like domain. The segment at 930–1056 (IQVPNDGKIL…DQSLEAITIK (127 aa)) is allosteric domain.

It belongs to the CarB family. In terms of assembly, composed of two chains; the small (or glutamine) chain promotes the hydrolysis of glutamine to ammonia, which is used by the large (or ammonia) chain to synthesize carbamoyl phosphate. Tetramer of heterodimers (alpha,beta)4. It depends on Mg(2+) as a cofactor. Mn(2+) serves as cofactor.

It carries out the reaction hydrogencarbonate + L-glutamine + 2 ATP + H2O = carbamoyl phosphate + L-glutamate + 2 ADP + phosphate + 2 H(+). The enzyme catalyses hydrogencarbonate + NH4(+) + 2 ATP = carbamoyl phosphate + 2 ADP + phosphate + 2 H(+). It functions in the pathway amino-acid biosynthesis; L-arginine biosynthesis; carbamoyl phosphate from bicarbonate: step 1/1. The protein operates within pyrimidine metabolism; UMP biosynthesis via de novo pathway; (S)-dihydroorotate from bicarbonate: step 1/3. Its function is as follows. Large subunit of the glutamine-dependent carbamoyl phosphate synthetase (CPSase). CPSase catalyzes the formation of carbamoyl phosphate from the ammonia moiety of glutamine, carbonate, and phosphate donated by ATP, constituting the first step of 2 biosynthetic pathways, one leading to arginine and/or urea and the other to pyrimidine nucleotides. The large subunit (synthetase) binds the substrates ammonia (free or transferred from glutamine from the small subunit), hydrogencarbonate and ATP and carries out an ATP-coupled ligase reaction, activating hydrogencarbonate by forming carboxy phosphate which reacts with ammonia to form carbamoyl phosphate. This chain is Carbamoyl phosphate synthase large chain, found in Limosilactobacillus reuteri (strain DSM 20016) (Lactobacillus reuteri).